Consider the following 439-residue polypeptide: 26S proteasome regulatory subunit 6A (439 aa).

N-acetylmethionine is present on Met-1. At Ser-9 the chain carries Phosphoserine. 227 to 234 serves as a coordination point for ATP; it reads GPPGTGKT. Residue Ser-376 is modified to Phosphoserine.

This sequence belongs to the AAA ATPase family. As to quaternary structure, component of the 19S proteasome regulatory particle complex. The 26S proteasome consists of a 20S core particle (CP) and two 19S regulatory subunits (RP). The regulatory particle is made of a lid composed of 9 subunits, a base containing 6 ATPases including PSMC3 and few additional components. Interacts with PAAF1. In terms of assembly, (Microbial infection) Interacts with HIV-1 Tat. In terms of processing, sumoylated by UBE2I in response to MEKK1-mediated stimuli.

The protein resides in the cytoplasm. It is found in the nucleus. Functionally, component of the 26S proteasome, a multiprotein complex involved in the ATP-dependent degradation of ubiquitinated proteins. This complex plays a key role in the maintenance of protein homeostasis by removing misfolded or damaged proteins, which could impair cellular functions, and by removing proteins whose functions are no longer required. Therefore, the proteasome participates in numerous cellular processes, including cell cycle progression, apoptosis, or DNA damage repair. PSMC3 belongs to the heterohexameric ring of AAA (ATPases associated with diverse cellular activities) proteins that unfolds ubiquitinated target proteins that are concurrently translocated into a proteolytic chamber and degraded into peptides. This chain is 26S proteasome regulatory subunit 6A (PSMC3), found in Homo sapiens (Human).